A 145-amino-acid chain; its full sequence is Superoxide dismutase [Mn/Fe] (145 aa).

Fe(3+)-binding residues include H10 and H64. H10 and H64 together coordinate Mn(2+). A disordered region spans residues 126-145 (TSTANQDTPISEGKKPILGL).

This sequence belongs to the iron/manganese superoxide dismutase family. Mn(2+) serves as cofactor. The cofactor is Fe(3+).

The catalysed reaction is 2 superoxide + 2 H(+) = H2O2 + O2. In terms of biological role, destroys superoxide anion radicals which are normally produced within the cells and which are toxic to biological systems. Catalyzes the dismutation of superoxide anion radicals into O2 and H2O2 by successive reduction and oxidation of the transition metal ion at the active site. In Streptococcus oralis, this protein is Superoxide dismutase [Mn/Fe] (sodA).